Consider the following 214-residue polypeptide: ATP phosphoribosyltransferase (214 aa).

This sequence belongs to the ATP phosphoribosyltransferase family. Short subfamily. As to quaternary structure, heteromultimer composed of HisG and HisZ subunits.

The protein localises to the cytoplasm. It catalyses the reaction 1-(5-phospho-beta-D-ribosyl)-ATP + diphosphate = 5-phospho-alpha-D-ribose 1-diphosphate + ATP. Its pathway is amino-acid biosynthesis; L-histidine biosynthesis; L-histidine from 5-phospho-alpha-D-ribose 1-diphosphate: step 1/9. Functionally, catalyzes the condensation of ATP and 5-phosphoribose 1-diphosphate to form N'-(5'-phosphoribosyl)-ATP (PR-ATP). Has a crucial role in the pathway because the rate of histidine biosynthesis seems to be controlled primarily by regulation of HisG enzymatic activity. In Nostoc punctiforme (strain ATCC 29133 / PCC 73102), this protein is ATP phosphoribosyltransferase.